A 407-amino-acid chain; its full sequence is L-amino-acid oxidase (407 aa).

Cysteine 10 and cysteine 94 are disulfide-bonded. An N-linked (GlcNAc...) asparagine glycan is attached at asparagine 93. Substrate is bound at residue histidine 144. Valine 182 serves as a coordination point for FAD. An intrachain disulfide couples cysteine 252 to cysteine 333. A glycan (N-linked (GlcNAc...) asparagine) is linked at asparagine 282. A substrate-binding site is contributed by tyrosine 293. FAD contacts are provided by residues glutamate 378 and 385-390 (GWIDST). Residue 385-386 (GW) coordinates substrate.

It belongs to the flavin monoamine oxidase family. FIG1 subfamily. Homodimer; non-covalently linked. It depends on FAD as a cofactor. In terms of tissue distribution, expressed by the venom gland.

Its subcellular location is the secreted. It catalyses the reaction an L-alpha-amino acid + O2 + H2O = a 2-oxocarboxylate + H2O2 + NH4(+). It carries out the reaction L-leucine + O2 + H2O = 4-methyl-2-oxopentanoate + H2O2 + NH4(+). The catalysed reaction is L-phenylalanine + O2 + H2O = 3-phenylpyruvate + H2O2 + NH4(+). The enzyme catalyses L-isoleucine + O2 + H2O = (S)-3-methyl-2-oxopentanoate + H2O2 + NH4(+). It catalyses the reaction L-aspartate + O2 + H2O = oxaloacetate + H2O2 + NH4(+). It carries out the reaction L-lysine + O2 + H2O = 6-amino-2-oxohexanoate + H2O2 + NH4(+). The catalysed reaction is L-glutamate + O2 + H2O = H2O2 + 2-oxoglutarate + NH4(+). Its function is as follows. Catalyzes an oxidative deamination of predominantly hydrophobic and aromatic L-amino acids, thus producing hydrogen peroxide that may contribute to the diverse toxic effects of this enzyme. Is highly active on L-Leu followed by L-Phe and L-Ile, moderately active on L-Asp, L-Glu, and L-Lys, and not active on L-Pro, L-Asn, L-Gly, L-Ser and L-Cys. Exhibits diverse biological activities such as antibacterial activity (Minimal inhibitory concentrations (MIC) are 9.0 ug/ml against S.aureus, 144.0 ug/ml against P.aeruginosa and 288.0 ug/ml against E.coli) and inhibition of ADP- and TMVA-induced platelet aggregation. Effects of snake L-amino oxidases on platelets are controversial, since they either induce aggregation or inhibit agonist-induced aggregation. These different effects are probably due to different experimental conditions. Unlike other snake venom L-amino acid oxidases, does not induce hemorrhage. This protein may also induce hemolysis, edema, apoptosis and have antiparasitic activities. This Daboia siamensis (Eastern Russel's viper) protein is L-amino-acid oxidase.